A 296-amino-acid polypeptide reads, in one-letter code: Small ribosomal subunit biogenesis GTPase RsgA (296 aa).

The region spanning 63–224 is the CP-type G domain; it reads KNQLVRPMVA…IADTPGFSSY (162 aa). GTP contacts are provided by residues 112-115 and 167-175; these read SKTD and GQTGAGKST. Zn(2+) is bound by residues cysteine 248, cysteine 253, histidine 255, and cysteine 261.

This sequence belongs to the TRAFAC class YlqF/YawG GTPase family. RsgA subfamily. In terms of assembly, monomer. Associates with 30S ribosomal subunit, binds 16S rRNA. It depends on Zn(2+) as a cofactor.

The protein localises to the cytoplasm. Its function is as follows. One of several proteins that assist in the late maturation steps of the functional core of the 30S ribosomal subunit. Helps release RbfA from mature subunits. May play a role in the assembly of ribosomal proteins into the subunit. Circularly permuted GTPase that catalyzes slow GTP hydrolysis, GTPase activity is stimulated by the 30S ribosomal subunit. The chain is Small ribosomal subunit biogenesis GTPase RsgA from Limosilactobacillus fermentum (strain NBRC 3956 / LMG 18251) (Lactobacillus fermentum).